The sequence spans 159 residues: Probable histone H2A.5 (159 aa).

Over residues 1 to 10 (MDAAGAGAGG) the composition is skewed to gly residues. 2 disordered regions span residues 1–29 (MDAA…KKAV) and 136–159 (EKAA…PKKA). 2 stretches are compositionally biased toward basic residues: residues 11 to 29 (KLKK…KKAV) and 148 to 159 (PKKAAGKSPKKA). 2 short sequence motifs (SPKK motif) span residues 147–150 (SPKK) and 155–158 (SPKK).

It belongs to the histone H2A family. As to quaternary structure, the nucleosome is a histone octamer containing two molecules each of H2A, H2B, H3 and H4 assembled in one H3-H4 heterotetramer and two H2A-H2B heterodimers. The octamer wraps approximately 147 bp of DNA.

The protein localises to the nucleus. Its subcellular location is the chromosome. In terms of biological role, core component of nucleosome. Nucleosomes wrap and compact DNA into chromatin, limiting DNA accessibility to the cellular machineries which require DNA as a template. Histones thereby play a central role in transcription regulation, DNA repair, DNA replication and chromosomal stability. DNA accessibility is regulated via a complex set of post-translational modifications of histones, also called histone code, and nucleosome remodeling. This is Probable histone H2A.5 from Oryza sativa subsp. indica (Rice).